A 184-amino-acid chain; its full sequence is MAEDLVFELGADRSLLLVDDDEPFLKRLAKAMEKRGFVLETAQSVAEGKAIAQARPPAYAVVDLRLEDGNGLDVVEVLRERRPDCRIVVLTGYGAIATAVAAVKIGATDYLSKPADANEVTHALLAKGESLPPPPENPMSADRVRWEHIQRIYEMCDRNVSETARRLNMHRRTLQRILAKRSPR.

The 115-residue stretch at 14–128 (SLLLVDDDEP…EVTHALLAKG (115 aa)) folds into the Response regulatory domain.

In terms of processing, phosphorylated by RegB.

Member of the two-component regulatory system RegB/RegA. Involved in transactivating anaerobic expression of the photosynthetic apparatus. It is a transcriptional regulator that is responsible for activating expression of the puf, puh, and puc operons in response to a decrease in oxygen tension. In Cereibacter sphaeroides (strain ATCC 17023 / DSM 158 / JCM 6121 / CCUG 31486 / LMG 2827 / NBRC 12203 / NCIMB 8253 / ATH 2.4.1.) (Rhodobacter sphaeroides), this protein is Photosynthetic apparatus regulatory protein RegA (regA).